Reading from the N-terminus, the 156-residue chain is 6,7-dimethyl-8-ribityllumazine synthase (156 aa).

5-amino-6-(D-ribitylamino)uracil contacts are provided by residues F23, 57–59 (AFE), and 81–83 (TVI). Residue 86 to 87 (ST) participates in (2S)-2-hydroxy-3-oxobutyl phosphate binding. H89 functions as the Proton donor in the catalytic mechanism. F114 lines the 5-amino-6-(D-ribitylamino)uracil pocket. R128 is a (2S)-2-hydroxy-3-oxobutyl phosphate binding site.

Belongs to the DMRL synthase family. In terms of assembly, forms an icosahedral capsid composed of 60 subunits, arranged as a dodecamer of pentamers.

The enzyme catalyses (2S)-2-hydroxy-3-oxobutyl phosphate + 5-amino-6-(D-ribitylamino)uracil = 6,7-dimethyl-8-(1-D-ribityl)lumazine + phosphate + 2 H2O + H(+). It functions in the pathway cofactor biosynthesis; riboflavin biosynthesis; riboflavin from 2-hydroxy-3-oxobutyl phosphate and 5-amino-6-(D-ribitylamino)uracil: step 1/2. Catalyzes the formation of 6,7-dimethyl-8-ribityllumazine by condensation of 5-amino-6-(D-ribitylamino)uracil with 3,4-dihydroxy-2-butanone 4-phosphate. This is the penultimate step in the biosynthesis of riboflavin. The sequence is that of 6,7-dimethyl-8-ribityllumazine synthase from Shouchella clausii (strain KSM-K16) (Alkalihalobacillus clausii).